A 169-amino-acid polypeptide reads, in one-letter code: Peptide deformylase (169 aa).

Residues C91 and H133 each coordinate Fe cation. Residue E134 is part of the active site. Residue H137 participates in Fe cation binding.

It belongs to the polypeptide deformylase family. Fe(2+) serves as cofactor.

The catalysed reaction is N-terminal N-formyl-L-methionyl-[peptide] + H2O = N-terminal L-methionyl-[peptide] + formate. In terms of biological role, removes the formyl group from the N-terminal Met of newly synthesized proteins. Requires at least a dipeptide for an efficient rate of reaction. N-terminal L-methionine is a prerequisite for activity but the enzyme has broad specificity at other positions. This chain is Peptide deformylase, found in Haemophilus influenzae (strain 86-028NP).